A 217-amino-acid chain; its full sequence is Thiamine-phosphate synthase (217 aa).

4-amino-2-methyl-5-(diphosphooxymethyl)pyrimidine-binding positions include 38 to 42 (QYRDK) and Asn-70. The Mg(2+) site is built by Asp-71 and Asp-90. Ser-109 serves as a coordination point for 4-amino-2-methyl-5-(diphosphooxymethyl)pyrimidine. 136–138 (SIT) is a 2-[(2R,5Z)-2-carboxy-4-methylthiazol-5(2H)-ylidene]ethyl phosphate binding site. Lys-139 provides a ligand contact to 4-amino-2-methyl-5-(diphosphooxymethyl)pyrimidine. Residue Gly-166 participates in 2-[(2R,5Z)-2-carboxy-4-methylthiazol-5(2H)-ylidene]ethyl phosphate binding.

This sequence belongs to the thiamine-phosphate synthase family. It depends on Mg(2+) as a cofactor.

It catalyses the reaction 2-[(2R,5Z)-2-carboxy-4-methylthiazol-5(2H)-ylidene]ethyl phosphate + 4-amino-2-methyl-5-(diphosphooxymethyl)pyrimidine + 2 H(+) = thiamine phosphate + CO2 + diphosphate. It carries out the reaction 2-(2-carboxy-4-methylthiazol-5-yl)ethyl phosphate + 4-amino-2-methyl-5-(diphosphooxymethyl)pyrimidine + 2 H(+) = thiamine phosphate + CO2 + diphosphate. The catalysed reaction is 4-methyl-5-(2-phosphooxyethyl)-thiazole + 4-amino-2-methyl-5-(diphosphooxymethyl)pyrimidine + H(+) = thiamine phosphate + diphosphate. It functions in the pathway cofactor biosynthesis; thiamine diphosphate biosynthesis; thiamine phosphate from 4-amino-2-methyl-5-diphosphomethylpyrimidine and 4-methyl-5-(2-phosphoethyl)-thiazole: step 1/1. In terms of biological role, condenses 4-methyl-5-(beta-hydroxyethyl)thiazole monophosphate (THZ-P) and 2-methyl-4-amino-5-hydroxymethyl pyrimidine pyrophosphate (HMP-PP) to form thiamine monophosphate (TMP). The chain is Thiamine-phosphate synthase from Nitrosococcus oceani (strain ATCC 19707 / BCRC 17464 / JCM 30415 / NCIMB 11848 / C-107).